Consider the following 817-residue polypeptide: Fibroblast growth factor receptor 2 (817 aa).

The N-terminal stretch at 1–22 is a signal peptide; sequence MFARGWLLGALLLMTLATVSVA. Residues 23-377 are Extracellular-facing; it reads RPSLKIDLVN…ETDYPPDYVE (355 aa). 3 Ig-like C2-type domains span residues 26–126, 159–247, and 256–358; these read LKID…VNVT, PEKM…YTLD, and PILQ…AWLT. N-linked (GlcNAc...) asparagine glycans are attached at residues asparagine 32, asparagine 84, and asparagine 124. A disulfide bridge links cysteine 63 with cysteine 108. A heparin-binding region spans residues 161 to 178; it reads KMEKKLHAVPAANTVKFR. Cysteine 179 and cysteine 231 are disulfide-bonded. 5 N-linked (GlcNAc...) asparagine glycosylation sites follow: asparagine 228, asparagine 265, asparagine 297, asparagine 318, and asparagine 331. Cysteine 278 and cysteine 342 are oxidised to a cystine. The helical transmembrane segment at 378-398 threads the bilayer; sequence IAIYCIGVFLIACMVVIVVVC. Residues 399–817 are Cytoplasmic-facing; that stretch reads RMRTSAKKPD…YQHINGGIKT (419 aa). The interval 429-465 is disordered; it reads TVSSDSSSSMSSSTPLVRITTRRSSAHDDPIPEYDLP. Residues 431-441 show a composition bias toward low complexity; the sequence is SSDSSSSMSSS. Tyrosine 462 carries the phosphotyrosine; by autocatalysis modification. The region spanning 477–766 is the Protein kinase domain; it reads LTLGKPLGEG…LTLATNEEYL (290 aa). Residues 483–491, lysine 513, 561–563, and asparagine 567 each bind ATP; these read LGEGCFGQV and EYA. Tyrosine 582 carries the post-translational modification Phosphotyrosine; by autocatalysis. Aspartate 622 acts as the Proton acceptor in catalysis. Phosphotyrosine; by autocatalysis occurs at positions 652, 653, and 765.

Belongs to the protein kinase superfamily. Tyr protein kinase family. Fibroblast growth factor receptor subfamily. Monomer. Homodimer after ligand binding. Autophosphorylated. Binding of FGF family members together with heparan sulfate proteoglycan or heparin promotes receptor dimerization and autophosphorylation on tyrosine residues. Autophosphorylation occurs in trans between the two FGFR molecules present in the dimer. Post-translationally, N-glycosylated in the endoplasmic reticulum. The N-glycan chains undergo further maturation to an Endo H-resistant form in the Golgi apparatus. In terms of processing, ubiquitinated. FGFR2 is rapidly ubiquitinated after autophosphorylation, leading to internalization and degradation. Subject to degradation both in lysosomes and by the proteasome.

It is found in the cell membrane. It localises to the golgi apparatus. Its subcellular location is the cytoplasmic vesicle. The catalysed reaction is L-tyrosyl-[protein] + ATP = O-phospho-L-tyrosyl-[protein] + ADP + H(+). Present in an inactive conformation in the absence of bound ligand. Ligand binding leads to dimerization and activation by autophosphorylation on tyrosine residues. Its function is as follows. Tyrosine-protein kinase that acts as a cell-surface receptor for fibroblast growth factors and plays an essential role in the regulation of cell proliferation, differentiation, migration and apoptosis, and in the regulation of embryonic development. Required for normal embryonic patterning, limb bud development, lung morphogenesis, osteogenesis and skin development. Plays an essential role in the regulation of osteoblast differentiation, proliferation and apoptosis, and is required for normal skeleton development. Promotes cell proliferation in keratinocytes and immature osteoblasts, but promotes apoptosis in differentiated osteoblasts. Phosphorylates PLCG1, FRS2 and PAK4. Ligand binding leads to the activation of several signaling cascades. Activation of PLCG1 leads to the production of the cellular signaling molecules diacylglycerol and inositol 1,4,5-trisphosphate. Phosphorylation of FRS2 triggers recruitment of GRB2, GAB1, PIK3R1 and SOS1, and mediates activation of RAS, MAPK1/ERK2, MAPK3/ERK1 and the MAP kinase signaling pathway, as well as of the AKT1 signaling pathway. FGFR2 signaling is down-regulated by ubiquitination, internalization and degradation. Mutations that lead to constitutive kinase activation or impair normal FGFR2 maturation, internalization and degradation lead to aberrant signaling. Over-expressed FGFR2 promotes activation of STAT1. The protein is Fibroblast growth factor receptor 2 (fgfr2) of Danio rerio (Zebrafish).